Here is a 173-residue protein sequence, read N- to C-terminus: Alpha-crystallin A chain (173 aa).

Residue M1 is modified to N-acetylmethionine. Residues 1–63 (MDIAIQHPWF…RSVLDSGISE (63 aa)) form a required for complex formation with BFSP1 and BFSP2 region. Q6 bears the Deamidated glutamine; partial mark. Position 45 is a phosphoserine (S45). A Deamidated glutamine; partial modification is found at Q50. Residues 52–162 (VFRSVLDSGI…GHSERAIPVS (111 aa)) enclose the sHSP domain. 2 positions are modified to N6-acetyllysine: K70 and K99. H100 serves as a coordination point for Zn(2+). N101 carries the post-translational modification Deamidated asparagine; partial. Zn(2+) is bound by residues E102 and H107. S122 bears the Phosphoserine mark. N123 is modified (deamidated asparagine; partial). The tract at residues 144-173 (PKVPSGVDAGHSERAIPVSREEKPSSAPSS) is disordered. Basic and acidic residues predominate over residues 153-167 (GHSERAIPVSREEKP). H154 provides a ligand contact to Zn(2+). A glycan (O-linked (GlcNAc) serine) is linked at S162.

It belongs to the small heat shock protein (HSP20) family. As to quaternary structure, heteromer composed of three CRYAA and one CRYAB subunits. Inter-subunit bridging via zinc ions enhances stability, which is crucial as there is no protein turn over in the lens. Can also form homodimers and homotetramers (dimers of dimers) which serve as the building blocks of homooligomers. Within homooligomers, the zinc-binding motif is created from residues of 3 different molecules. His-100 and Glu-102 from one molecule are ligands of the zinc ion, and His-107 and His-154 residues from additional molecules complete the site with tetrahedral coordination geometry. Part of a complex required for lens intermediate filament formation composed of BFSP1, BFSP2 and CRYAA. In terms of processing, acetylation at Lys-70 may increase chaperone activity. Post-translationally, undergoes age-dependent proteolytical cleavage at the C-terminus.

It localises to the cytoplasm. The protein resides in the nucleus. In terms of biological role, contributes to the transparency and refractive index of the lens. Acts as a chaperone, preventing aggregation of various proteins under a wide range of stress conditions. Required for the correct formation of lens intermediate filaments as part of a complex composed of BFSP1, BFSP2 and CRYAA. The polypeptide is Alpha-crystallin A chain (CRYAA) (Halichoerus grypus (Gray seal)).